Reading from the N-terminus, the 1065-residue chain is DNA ligase 4 (1065 aa).

Residues M1–Q20 form a disordered region. Residues E295, K297, L298, R302, E357, F387, E452, K457, K474, and K476 each contribute to the ATP site. The N6-AMP-lysine intermediate role is filled by K297. Residue E357 coordinates Mg(2+). A Mg(2+)-binding site is contributed by E452. Positions V696–L775 constitute a BRCT 1 domain. Positions G825 to Y928 are disordered. Composition is skewed to basic and acidic residues over residues E834–Q864 and M886–R900. A BRCT 2 domain is found at D954–P1064.

The protein belongs to the ATP-dependent DNA ligase family. Mg(2+) serves as cofactor.

It localises to the nucleus. It catalyses the reaction ATP + (deoxyribonucleotide)n-3'-hydroxyl + 5'-phospho-(deoxyribonucleotide)m = (deoxyribonucleotide)n+m + AMP + diphosphate.. Its function is as follows. DNA ligase involved in DNA non-homologous end joining (NHEJ); required for double-strand break (DSB) repair. The chain is DNA ligase 4 (LIG4) from Cryptococcus neoformans var. neoformans serotype D (strain B-3501A) (Filobasidiella neoformans).